The following is a 727-amino-acid chain: Probable copper-importing P-type ATPase A (727 aa).

Residues 1-94 are Cytoplasmic-facing; that stretch reads MATNTKMETF…QTYLRKMKFD (94 aa). The region spanning 6–70 is the HMA domain; the sequence is KMETFVITGM…SVENIGYGAI (65 aa). Cys17 and Cys20 together coordinate Cu(+). A helical transmembrane segment spans residues 95-115; that stretch reads LIFSAILTLPLMLAMIAMMLG. Residues 116 to 119 lie on the Extracellular side of the membrane; the sequence is SHGP. Residues 120–137 traverse the membrane as a helical segment; it reads IVSFFHLSLVQLLFALPV. Topologically, residues 138 to 161 are cytoplasmic; the sequence is QFYVGWRFYKGAYHALKTKAPNMD. A helical membrane pass occupies residues 162 to 181; the sequence is VLVAIGTSAAFALSIYNGFF. At 182 to 187 the chain is on the extracellular side; sequence PSHSHD. Residues 188 to 203 traverse the membrane as a helical segment; sequence LYFESSSMIITLILLG. Residues 204–341 lie on the Cytoplasmic side of the membrane; the sequence is KYLEHTAKSK…PIQQIADKIS (138 aa). Residues 342–362 form a helical membrane-spanning segment; it reads GIFVPIVLFLALVTLLVTGWL. Residues 363–375 are Extracellular-facing; sequence TKDWQLALLHSVS. The chain crosses the membrane as a helical span at residues 376–396; that stretch reads VLVIACPCALGLATPTAIMVG. The Cytoplasmic portion of the chain corresponds to 397 to 678; that stretch reads TGVGAHNGIL…AATLKKIKQN (282 aa). Asp425 acts as the 4-aspartylphosphate intermediate in catalysis. Residues Asp621 and Asp625 each coordinate Mg(2+). The chain crosses the membrane as a helical span at residues 679–698; the sequence is LFWAFIYNTIGIPFAAFGFL. Residues 699 to 700 lie on the Extracellular side of the membrane; it reads NP. The helical transmembrane segment at 701-721 threads the bilayer; that stretch reads IIAGGAMAFSSISVLLNSLSL. Residues 722–727 lie on the Cytoplasmic side of the membrane; that stretch reads NRKTIK.

The protein belongs to the cation transport ATPase (P-type) (TC 3.A.3) family. Type IB subfamily. As to quaternary structure, monomer. Interacts with the copper chaperone CopZ.

The protein localises to the cell membrane. It catalyses the reaction Cu(+)(in) + ATP + H2O = Cu(+)(out) + ADP + phosphate + H(+). With respect to regulation, inhibited by vanadate. Its function is as follows. Probably involved in copper import under copper limiting conditions. This chain is Probable copper-importing P-type ATPase A (copA), found in Enterococcus hirae (strain ATCC 9790 / DSM 20160 / JCM 8729 / LMG 6399 / NBRC 3181 / NCIMB 6459 / NCDO 1258 / NCTC 12367 / WDCM 00089 / R).